Consider the following 962-residue polypeptide: Glycine dehydrogenase (decarboxylating) (962 aa).

Residue lysine 709 is modified to N6-(pyridoxal phosphate)lysine.

It belongs to the GcvP family. As to quaternary structure, the glycine cleavage system is composed of four proteins: P, T, L and H. It depends on pyridoxal 5'-phosphate as a cofactor.

The catalysed reaction is N(6)-[(R)-lipoyl]-L-lysyl-[glycine-cleavage complex H protein] + glycine + H(+) = N(6)-[(R)-S(8)-aminomethyldihydrolipoyl]-L-lysyl-[glycine-cleavage complex H protein] + CO2. Its function is as follows. The glycine cleavage system catalyzes the degradation of glycine. The P protein binds the alpha-amino group of glycine through its pyridoxal phosphate cofactor; CO(2) is released and the remaining methylamine moiety is then transferred to the lipoamide cofactor of the H protein. The chain is Glycine dehydrogenase (decarboxylating) from Shewanella pealeana (strain ATCC 700345 / ANG-SQ1).